Here is a 427-residue protein sequence, read N- to C-terminus: MAPERRSRLSDAGILVSLLALTSLVPVQAAVTTSKPDYAKRAERVLRSTPLIDGHNDLPFAIRRSTHDQIYDGKVPFETALKGQTDLPRMRKGRMGGQFWSVYVGCPSDPNTPIDFPTFATRDTLEQIDVARRLVDKYSKDLMYCDNPACAKKAFREGKIGSFIGIEGGHQVGSSIAALRQAFYAGARYMTLTHNCDNAWATAASTVRAGKPDLGMTEFGPALIKEMNRLGMLVDLSHVSHQTMRDVLKVTKAPVIFSHSSAYAVSKHLRNVPDDVLKTVAKNNGVVMVTFVRSFVNIDNPDSVTVDDIVKHIFHIAEVAGWDHVGLGGDYDGTTELPKGLEDVSKYPYLIEKVLEHGATEEQARKLIGENILRVWTEVEKIGKRIQNSGALPVEEVWQGRNWTQSLTKRSTFIPTESPTQLEFGCD.

A signal peptide spans 1 to 29 (MAPERRSRLSDAGILVSLLALTSLVPVQA). Positions 55, 57, and 167 each coordinate Zn(2+). A disulfide bridge links Cys106 with Cys196. Position 194 (His194) interacts with substrate. Residues His238 and His259 each coordinate Zn(2+). The substrate site is built by Arg270 and Asp330. N-linked (GlcNAc...) asparagine glycosylation occurs at Asn402.

It belongs to the metallo-dependent hydrolases superfamily. Peptidase M19 family. It depends on Zn(2+) as a cofactor.

It carries out the reaction an L-aminoacyl-L-amino acid + H2O = 2 an L-alpha-amino acid. Its function is as follows. Hydrolyzes a wide range of dipeptides. The chain is Putative dipeptidase MCYG_02918 from Arthroderma otae (strain ATCC MYA-4605 / CBS 113480) (Microsporum canis).